A 539-amino-acid chain; its full sequence is Chaperonin GroEL 2 (539 aa).

ATP-binding positions include 29-32 (TIGP), 86-90 (DGTTT), Gly-414, 479-481 (DAL), and Asp-495.

Belongs to the chaperonin (HSP60) family. Forms a cylinder of 14 subunits composed of two heptameric rings stacked back-to-back. Interacts with the co-chaperonin GroES.

It is found in the cytoplasm. The enzyme catalyses ATP + H2O + a folded polypeptide = ADP + phosphate + an unfolded polypeptide.. Functionally, together with its co-chaperonin GroES, plays an essential role in assisting protein folding. The GroEL-GroES system forms a nano-cage that allows encapsulation of the non-native substrate proteins and provides a physical environment optimized to promote and accelerate protein folding. This is Chaperonin GroEL 2 from Synechococcus sp. (strain JA-2-3B'a(2-13)) (Cyanobacteria bacterium Yellowstone B-Prime).